Here is a 131-residue protein sequence, read N- to C-terminus: Small ribosomal subunit protein eS8 (131 aa).

Residues 11–36 (DLKKPSGGKKGRVRKTKKKALCGGPP) form a disordered region. Residues 16–30 (SGGKKGRVRKTKKKA) are compositionally biased toward basic residues.

It belongs to the eukaryotic ribosomal protein eS8 family. As to quaternary structure, part of the 30S ribosomal subunit.

This Pyrobaculum islandicum (strain DSM 4184 / JCM 9189 / GEO3) protein is Small ribosomal subunit protein eS8.